The following is a 207-amino-acid chain: MKFKDKLKFYVITDSNYSDEVISVEESLKGGATSIQLRMKTSSTRKMIEVGNKLRKLTSEYDALFFVNDRLDVAQAVNADGIHVGIDDMPVSKIKEIAPNLIIGASAYNLDEMKTAESEGADYLGVGAVYSTNTKLDARDLGINGLKNISKIANLPIVAIGGINHSNVENVLKCGVSGVAVVSAIVGAENILKSAENMNELIKKYIK.

4-amino-2-methyl-5-(diphosphooxymethyl)pyrimidine-binding positions include 36–40 (QLRMK) and Asn68. Positions 69 and 88 each coordinate Mg(2+). A 4-amino-2-methyl-5-(diphosphooxymethyl)pyrimidine-binding site is contributed by Ser106. Position 132-134 (132-134 (TNT)) interacts with 2-[(2R,5Z)-2-carboxy-4-methylthiazol-5(2H)-ylidene]ethyl phosphate. Lys135 provides a ligand contact to 4-amino-2-methyl-5-(diphosphooxymethyl)pyrimidine. 2-[(2R,5Z)-2-carboxy-4-methylthiazol-5(2H)-ylidene]ethyl phosphate-binding positions include Gly162 and 182–183 (VS).

It belongs to the thiamine-phosphate synthase family. Mg(2+) serves as cofactor.

It carries out the reaction 2-[(2R,5Z)-2-carboxy-4-methylthiazol-5(2H)-ylidene]ethyl phosphate + 4-amino-2-methyl-5-(diphosphooxymethyl)pyrimidine + 2 H(+) = thiamine phosphate + CO2 + diphosphate. It catalyses the reaction 2-(2-carboxy-4-methylthiazol-5-yl)ethyl phosphate + 4-amino-2-methyl-5-(diphosphooxymethyl)pyrimidine + 2 H(+) = thiamine phosphate + CO2 + diphosphate. The catalysed reaction is 4-methyl-5-(2-phosphooxyethyl)-thiazole + 4-amino-2-methyl-5-(diphosphooxymethyl)pyrimidine + H(+) = thiamine phosphate + diphosphate. It participates in cofactor biosynthesis; thiamine diphosphate biosynthesis; thiamine phosphate from 4-amino-2-methyl-5-diphosphomethylpyrimidine and 4-methyl-5-(2-phosphoethyl)-thiazole: step 1/1. Condenses 4-methyl-5-(beta-hydroxyethyl)thiazole monophosphate (THZ-P) and 2-methyl-4-amino-5-hydroxymethyl pyrimidine pyrophosphate (HMP-PP) to form thiamine monophosphate (TMP). The sequence is that of Thiamine-phosphate synthase from Methanococcus maripaludis (strain DSM 14266 / JCM 13030 / NBRC 101832 / S2 / LL).